Consider the following 361-residue polypeptide: RNA-binding protein 4 (361 aa).

RRM domains follow at residues 2-72 and 78-148; these read VKLF…ASKN and TKLH…LSTS. Lys-79 participates in a covalent cross-link: Glycyl lysine isopeptide (Lys-Gly) (interchain with G-Cter in SUMO2). A Phosphoserine modification is found at Ser-86. The CCHC-type zinc finger occupies 160–177; that stretch reads SGCYRCGKEGHWSKECPI. Residues 196-361 form an interaction with TNPO3 region; sequence AVRTPYTMSY…YADRARYSAF (166 aa). Position 306 is a phosphoserine (Ser-306).

In terms of assembly, interacts with TNPO3; the interaction mediates nuclear import of the protein and is disrupted by nuclear Ran bound to GTP. Interacts with EIF4G1 and WT1. Interacts with EIF4A1; the interaction is modulated under stress-induced conditions. Interacts with AGO1. Interacts with AGO2; the interaction occurs under both cell proliferation and differentiation conditions and in an RNA- and phosphorylation-independent manner. Interacts with DDX5; the interaction occurs in an RNA-independent manner. Interacts with RBPMS; the interaction allows cooperative assembly of RNA-bound stable cell-specific alternative splicing regulatory complexes. In terms of processing, phosphorylated. Phosphorylated in vitro on Ser-306 by SRPK1. Phosphorylation on Ser-306 is induced upon cell stress signaling, which alters its subcellular localization and may modulate its activity on IRES-mediated mRNA translation. Phosphorylated. Phosphorylation on Ser-306 is induced upon cell muscle differentiation. In terms of tissue distribution, expressed in the suprachiasmatic nucleus (SCN). Expressed in myocytes; expression gradually increases during muscle cell differentiation (at protein level). Expressed in the suprachiasmatic nucleus (SCN).

The protein localises to the nucleus. It is found in the nucleolus. The protein resides in the nucleus speckle. It localises to the cytoplasm. Its subcellular location is the cytoplasmic granule. In terms of biological role, RNA-binding factor involved in multiple aspects of cellular processes like alternative splicing of pre-mRNA and translation regulation. Modulates alternative 5'-splice site and exon selection. Acts as a muscle cell differentiation-promoting factor. Activates exon skipping of the PTB pre-mRNA during muscle cell differentiation. Antagonizes the activity of the splicing factor PTBP1 to modulate muscle cell-specific exon selection of alpha tropomyosin. Binds to intronic pyrimidine-rich sequence of the TPM1 and MAPT pre-mRNAs. Required for the translational activation of PER1 mRNA in response to circadian clock. Binds directly to the 3'-UTR of the PER1 mRNA. Exerts a suppressive activity on Cap-dependent translation via binding to CU-rich responsive elements within the 3'UTR of mRNAs, a process increased under stress conditions or during myocytes differentiation. Recruits EIF4A1 to stimulate IRES-dependent translation initiation in respons to cellular stress. Associates to internal ribosome entry segment (IRES) in target mRNA species under stress conditions. Plays a role for miRNA-guided RNA cleavage and translation suppression by promoting association of AGO2-containing miRNPs with their cognate target mRNAs. Associates with miRNAs during muscle cell differentiation. Binds preferentially to 5'-CGCGCG[GCA]-3' motif in vitro. In Mus musculus (Mouse), this protein is RNA-binding protein 4 (Rbm4).